A 256-amino-acid chain; its full sequence is Small ribosomal subunit protein eS1 (256 aa).

Positions 1-18 are enriched in basic residues; the sequence is MAVGKNKRLSKGKKGVKK. Residues 1–21 form a disordered region; that stretch reads MAVGKNKRLSKGKKGVKKRTV. Ala2 bears the N-acetylalanine; partial mark.

This sequence belongs to the eukaryotic ribosomal protein eS1 family. Component of the small ribosomal subunit. Mature ribosomes consist of a small (40S) and a large (60S) subunit. The 40S subunit contains about 33 different proteins and 1 molecule of RNA (18S). The 60S subunit contains about 49 different proteins and 3 molecules of RNA (25S, 5.8S and 5S).

Its subcellular location is the cytoplasm. The polypeptide is Small ribosomal subunit protein eS1 (rps1) (Aspergillus niger (strain ATCC MYA-4892 / CBS 513.88 / FGSC A1513)).